Reading from the N-terminus, the 231-residue chain is Large ribosomal subunit protein uL1 (231 aa).

The protein belongs to the universal ribosomal protein uL1 family. Part of the 50S ribosomal subunit.

Binds directly to 23S rRNA. The L1 stalk is quite mobile in the ribosome, and is involved in E site tRNA release. In terms of biological role, protein L1 is also a translational repressor protein, it controls the translation of the L11 operon by binding to its mRNA. In Azotobacter vinelandii (strain DJ / ATCC BAA-1303), this protein is Large ribosomal subunit protein uL1.